We begin with the raw amino-acid sequence, 279 residues long: Putative Delta(7)-sterol-C5(6)-desaturase 2 (279 aa).

2 consecutive transmembrane segments (helical) span residues leucine 48–leucine 68 and phenylalanine 127–valine 147. The Fatty acid hydroxylase domain maps to alanine 134 to serine 263. The Histidine box-1 motif lies at histidine 148–histidine 152. A Histidine box-2 motif is present at residues histidine 162–histidine 166. The helical transmembrane segment at histidine 194–leucine 214 threads the bilayer. The Histidine box-3 motif lies at histidine 239 to histidine 243.

Belongs to the sterol desaturase family. It depends on Fe cation as a cofactor.

The protein localises to the endoplasmic reticulum membrane. The catalysed reaction is a Delta(7)-sterol + 2 Fe(II)-[cytochrome b5] + O2 + 2 H(+) = a Delta(5),Delta(7)-sterol + 2 Fe(III)-[cytochrome b5] + 2 H2O. In Arabidopsis thaliana (Mouse-ear cress), this protein is Putative Delta(7)-sterol-C5(6)-desaturase 2 (HDF7).